The sequence spans 84 residues: Small ribosomal subunit protein bS20 (84 aa).

This sequence belongs to the bacterial ribosomal protein bS20 family.

Binds directly to 16S ribosomal RNA. This chain is Small ribosomal subunit protein bS20, found in Ligilactobacillus salivarius (strain UCC118) (Lactobacillus salivarius).